The sequence spans 1027 residues: Kinesin heavy chain isoform 5A (1027 aa).

Position 2 is an N-acetylalanine (A2). The region spanning 9-327 is the Kinesin motor domain; the sequence is SIKVLCRFRP…LMFGQRAKTI (319 aa). ATP is bound at residue 86–93; the sequence is GQTSSGKT. Residues 174–315 form a microtubule-binding region; the sequence is VSSPEEILDV…PSSYNDAETK (142 aa). A necessary for interaction with ZFYVE27 region spans residues 271–361; sequence EGTKSYVPYR…KTKAQKETIA (91 aa). The stretch at 331 to 905 forms a coiled coil; the sequence is ASVNLELTAE…EVDRIKEAVR (575 aa). The tract at residues 353-1027 is interaction with BICD2; sequence TKAQKETIAK…FPLHQETAAS (675 aa). Phosphothreonine is present on T397. Residues 906-936 are disordered; that stretch reads YKSSGKRGHSAQIAKPVRPGHYPASSPTNPY. Residues 907–1027 form a globular region; sequence KSSGKRGHSA…FPLHQETAAS (121 aa).

This sequence belongs to the TRAFAC class myosin-kinesin ATPase superfamily. Kinesin family. Kinesin subfamily. As to quaternary structure, oligomer composed of two heavy chains and two light chains. Interacts with GRIP1. Interacts with FMR1 (via C-terminus); this interaction is increased in a mGluR-dependent manner. Interacts with BORCS5. Interacts with ZFYVE27. Interacts with VAPA, VAPB, SURF4, RAB11A (GDP-bound form), RAB11B (GDP-bound form) and RTN3 in a ZFYVE27-dependent manner. Interacts with BICD2. Interacts with DTNB. As to expression, expressed in brain.

The protein resides in the cytoplasm. Its subcellular location is the perinuclear region. It is found in the cytoskeleton. It localises to the perikaryon. It catalyses the reaction ATP + H2O + a kinesin associated with a microtubule at position (n) = ADP + phosphate a kinesin associated with a microtubule at position (n+1, toward the plus end).. Its function is as follows. Microtubule-dependent motor required for slow axonal transport of neurofilament proteins (NFH, NFM and NFL). Can induce formation of neurite-like membrane protrusions in non-neuronal cells in a ZFYVE27-dependent manner. The ZFYVE27-KIF5A complex contributes to the vesicular transport of VAPA, VAPB, SURF4, RAB11A, RAB11B and RTN3 proteins in neurons. Required for anterograde axonal transportation of MAPK8IP3/JIP3 which is essential for MAPK8IP3/JIP3 function in axon elongation. The polypeptide is Kinesin heavy chain isoform 5A (Rattus norvegicus (Rat)).